Here is a 365-residue protein sequence, read N- to C-terminus: Probable caffeine synthase 2 (365 aa).

Residue tyrosine 19 coordinates S-adenosyl-L-homocysteine. Threonine 26 provides a ligand contact to caffeine. The S-adenosyl-L-homocysteine site is built by cysteine 62, aspartate 99, leucine 100, serine 134, and phenylalanine 135. Caffeine is bound by residues tyrosine 152, histidine 155, and tryptophan 156. Position 173 (asparagine 173) interacts with Mg(2+). Arginine 221 contacts caffeine. The Mg(2+) site is built by aspartate 259, phenylalanine 261, and asparagine 262. Position 317 (phenylalanine 317) interacts with caffeine.

Belongs to the methyltransferase superfamily. Type-7 methyltransferase family. The cofactor is Mg(2+).

It carries out the reaction 7-methylxanthine + S-adenosyl-L-methionine = theobromine + S-adenosyl-L-homocysteine + H(+). The enzyme catalyses theobromine + S-adenosyl-L-methionine = caffeine + S-adenosyl-L-homocysteine + H(+). The catalysed reaction is 1,7-dimethylxanthine + S-adenosyl-L-methionine = caffeine + S-adenosyl-L-homocysteine + H(+). It participates in alkaloid biosynthesis. Its function is as follows. May be involved in the biosynthesis of caffeine. Catalyzes the conversion of 7-methylxanthine (7mX) to theobromine and of theobromine to caffeine. Has 1-N-methylation activity. This is Probable caffeine synthase 2 from Camellia sinensis (Tea plant).